The chain runs to 80 residues: UPF0180 protein BPUM_1317 (80 aa).

Belongs to the UPF0180 family.

The polypeptide is UPF0180 protein BPUM_1317 (Bacillus pumilus (strain SAFR-032)).